Consider the following 617-residue polypeptide: Phosphomethylpyrimidine synthase (617 aa).

Residues N230, M259, Y288, H324, 344–346, 385–388, and E424 contribute to the substrate site; these read SRG and DGLR. A Zn(2+)-binding site is contributed by H428. Substrate is bound at residue Y451. Zn(2+) is bound at residue H492. [4Fe-4S] cluster-binding residues include C572, C575, and C580.

The protein belongs to the ThiC family. In terms of assembly, homodimer. It depends on [4Fe-4S] cluster as a cofactor.

The catalysed reaction is 5-amino-1-(5-phospho-beta-D-ribosyl)imidazole + S-adenosyl-L-methionine = 4-amino-2-methyl-5-(phosphooxymethyl)pyrimidine + CO + 5'-deoxyadenosine + formate + L-methionine + 3 H(+). It participates in cofactor biosynthesis; thiamine diphosphate biosynthesis. In terms of biological role, catalyzes the synthesis of the hydroxymethylpyrimidine phosphate (HMP-P) moiety of thiamine from aminoimidazole ribotide (AIR) in a radical S-adenosyl-L-methionine (SAM)-dependent reaction. The sequence is that of Phosphomethylpyrimidine synthase from Paracidovorax citrulli (strain AAC00-1) (Acidovorax citrulli).